The primary structure comprises 471 residues: Putative multidrug resistance protein MdtD (471 aa).

Residues 1–11 (MTDLPDSTRWQ) lie on the Periplasmic side of the membrane. A helical membrane pass occupies residues 12-32 (LWIVAFGFFMQSLDTTIVNTA). At 33-48 (LPSMAQSLGESPLHMH) the chain is on the cytoplasmic side. A helical membrane pass occupies residues 49-69 (MVIVSYVLTVAVMLPASGWLA). Residues 70 to 76 (DKVGVRN) lie on the Periplasmic side of the membrane. The chain crosses the membrane as a helical span at residues 77–97 (IFFTAIVLFTLGSLFCALSGT). Residues 98-101 (LNEL) are Cytoplasmic-facing. The chain crosses the membrane as a helical span at residues 102–124 (LLARALQGVGGAMMVPVGRLTVM). Over 125–137 (KIVPREQYMAAMT) the chain is Periplasmic. Residues 138–158 (FVTLPGQVGPLLGPALGGLLV) traverse the membrane as a helical segment. At 159-164 (EYASWH) the chain is on the cytoplasmic side. Residues 165-185 (WIFLINIPVGIIGAIATLMLM) traverse the membrane as a helical segment. Residues 186–196 (PNYTMQTRRFD) lie on the Periplasmic side of the membrane. Residues 197-217 (LSGFLLLAVGMAVLTLALDGS) form a helical membrane-spanning segment. Over 218–224 (KGTGLSP) the chain is Cytoplasmic. Residues 225 to 245 (LAIAGLVAVGVVALVLYLLHA) form a helical membrane-spanning segment. At 246-262 (RNNNRALFSLKLFRTRT) the chain is on the periplasmic side. A helical transmembrane segment spans residues 263 to 283 (FSLGLAGSFAGRIGSGMLPFM). Residues 284–285 (TP) are Cytoplasmic-facing. A helical membrane pass occupies residues 286–306 (VFLQIGLGFSPFHAGLMMIPM). At 307–341 (VLGSMGMKRIVVQVVNRFGYRRVLVATTLGLSLVT) the chain is on the periplasmic side. Residues 342–362 (LLFMTTALLGWYYVLPFVLFL) traverse the membrane as a helical segment. The Cytoplasmic portion of the chain corresponds to 363–395 (QGMVNSTRFSSMNTLTLKDLPDNLASSGNSLLS). Residues 396 to 416 (MIMQLSMSIGVTIAGLLLGLF) traverse the membrane as a helical segment. Residues 417-430 (GSQHISVDSGTTQT) are Periplasmic-facing. The chain crosses the membrane as a helical span at residues 431 to 451 (VFMYTWLSMAFIIALPAFIFA). Residues 452-471 (RVPNDTHQNVAISRRKRSAQ) lie on the Cytoplasmic side of the membrane.

The protein belongs to the major facilitator superfamily. TCR/Tet family.

The protein localises to the cell inner membrane. This Shigella flexneri protein is Putative multidrug resistance protein MdtD.